The primary structure comprises 419 residues: Histidine--tRNA ligase (419 aa).

This sequence belongs to the class-II aminoacyl-tRNA synthetase family.

It is found in the cytoplasm. It carries out the reaction tRNA(His) + L-histidine + ATP = L-histidyl-tRNA(His) + AMP + diphosphate + H(+). This Pyrobaculum aerophilum (strain ATCC 51768 / DSM 7523 / JCM 9630 / CIP 104966 / NBRC 100827 / IM2) protein is Histidine--tRNA ligase.